The primary structure comprises 375 residues: Succinyl-diaminopimelate desuccinylase (375 aa).

H66 provides a ligand contact to Zn(2+). D68 is an active-site residue. D99 lines the Zn(2+) pocket. E133 serves as the catalytic Proton acceptor. E134, E162, and H348 together coordinate Zn(2+).

It belongs to the peptidase M20A family. DapE subfamily. Homodimer. Zn(2+) is required as a cofactor. Co(2+) serves as cofactor.

The enzyme catalyses N-succinyl-(2S,6S)-2,6-diaminopimelate + H2O = (2S,6S)-2,6-diaminopimelate + succinate. Its pathway is amino-acid biosynthesis; L-lysine biosynthesis via DAP pathway; LL-2,6-diaminopimelate from (S)-tetrahydrodipicolinate (succinylase route): step 3/3. In terms of biological role, catalyzes the hydrolysis of N-succinyl-L,L-diaminopimelic acid (SDAP), forming succinate and LL-2,6-diaminopimelate (DAP), an intermediate involved in the bacterial biosynthesis of lysine and meso-diaminopimelic acid, an essential component of bacterial cell walls. This is Succinyl-diaminopimelate desuccinylase from Stenotrophomonas maltophilia (strain K279a).